Consider the following 687-residue polypeptide: Protein SDA1 homolog (687 aa).

3 positions are modified to phosphoserine: Ser232, Ser234, and Ser236. Residues 254–315 (KKGSKNKKKL…SCKERFEVKM (62 aa)) adopt a coiled-coil conformation. The segment at 484–509 (LEKGENTEDDEDGWESASLSEEEEED) is disordered. Residues 490–509 (TEDDEDGWESASLSEEEEED) show a composition bias toward acidic residues. A Phosphothreonine modification is found at Thr552. A phosphoserine mark is found at Ser585, Ser589, and Ser595. Positions 604–651 (KKPKSDKETRLATAMAGRTDRKEFVRKKTKINPFSSSTNKEKKKQKNF) are disordered.

This sequence belongs to the SDA1 family.

It localises to the nucleus. The protein localises to the nucleolus. Required for 60S pre-ribosomal subunits export to the cytoplasm. In Mus musculus (Mouse), this protein is Protein SDA1 homolog (Sdad1).